Here is a 64-residue protein sequence, read N- to C-terminus: UPF0434 protein BOV_A0835 (64 aa).

The protein belongs to the UPF0434 family.

This Brucella ovis (strain ATCC 25840 / 63/290 / NCTC 10512) protein is UPF0434 protein BOV_A0835.